Here is a 1709-residue protein sequence, read N- to C-terminus: Protein SHORTAGE IN CHIASMATA 1 homolog (1709 aa).

Basic and acidic residues-rich tracts occupy residues 532 to 542 (PKLQDEDKHSD), 552 to 568 (DPQK…EGGT), and 1601 to 1613 (ESFR…DTPS). Disordered regions lie at residues 532 to 586 (PKLQ…SSFP) and 1566 to 1662 (KRKA…DPTW).

This sequence belongs to the XPF family. In terms of assembly, interacts (via C-terminus) with PTD. Interacts with ZIP4. Highly expressed in anthers and pistil during meiosis. Expressed in pollen mother cells (PMCs) during meiosis. Expressed at low levels in roots, shoots, leaves, flowers, and glumes.

It localises to the chromosome. Its subcellular location is the nucleus. The protein localises to the cytoplasm. It is found in the cell membrane. Essential for normal crossover (CO) formation during meiosis. Essential component for the formation of class I meiotic COs. Interacts with PTD, another meiotic component, to regulate CO formation, possibly by stabilizing the recombination intermediates during meiosis. SHOC1 and PTD may form transient heterotrimeric or heterotetrameric complexes with HEI10 and/or ZIP4 to promote class I COs formation. Does not seem to be involved in early meiotic recombination steps involving double-strand break (DSB) formation, processing, and single-strand invasion. Does not seem to be involved in homologous pairing or synaptonemal complex (SC) assembly. The polypeptide is Protein SHORTAGE IN CHIASMATA 1 homolog (Oryza sativa subsp. japonica (Rice)).